The following is a 465-amino-acid chain: Alpha-2A adrenergic receptor (465 aa).

Over 1–48 (MFRQEQPLAEGSFAPMGSLQPDAGNSSWNGTEAPGGGTRATPYSLQVT) the chain is Extracellular. Residues asparagine 25 and asparagine 29 are each glycosylated (N-linked (GlcNAc...) asparagine). A helical transmembrane segment spans residues 49–74 (LTLVCLAGLLMLFTVFGNVLVIIAVF). Residues 75-85 (TSRALKAPQNL) lie on the Cytoplasmic side of the membrane. Residues 86-111 (FLVSLASADILVATLVIPFSLANEVM) traverse the membrane as a helical segment. Topologically, residues 112–121 (GYWYFGKVWC) are extracellular. Cysteine 121 and cysteine 203 are oxidised to a cystine. Residues 122-144 (EIYLALDVLFCTSSIVHLCAISL) traverse the membrane as a helical segment. Residues 145-164 (DRYWSITQAIEYNLKRTPRR) are Cytoplasmic-facing. A helical transmembrane segment spans residues 165 to 188 (IKAIIVTVWVISAVISFPPLISIE). The Extracellular portion of the chain corresponds to 189 to 207 (KKGAGGGQQPAEPSCKIND). Residues 208 to 232 (QKWYVISSSIGSFFAPCLIMILVYV) form a helical membrane-spanning segment. At 233-389 (RIYQIAKRRT…RQNREKRFTF (157 aa)) the chain is on the cytoplasmic side. The segment at 242-378 (TRVPPSRRGP…GGGAKASRWR (137 aa)) is disordered. Residues 313-330 (SSEHAERPPGPRRPDRGP) are compositionally biased toward basic and acidic residues. At serine 346 the chain carries Phosphoserine. Over residues 353-363 (GAAGPGASGSG) the composition is skewed to gly residues. Omega-N-methylarginine is present on arginine 368. The helical transmembrane segment at 390–414 (VLAVVIGVFVVCWFPFFFTYTLIAV) threads the bilayer. Residues 415 to 424 (GCPVPSQLFN) are Extracellular-facing. A helical membrane pass occupies residues 425 to 445 (FFFWFGYCNSSLNPVIYTIFN). The Cytoplasmic portion of the chain corresponds to 446–465 (HDFRRAFKKILCRGDRKRIV). Cysteine 457 carries the S-palmitoyl cysteine lipid modification.

This sequence belongs to the G-protein coupled receptor 1 family. Adrenergic receptor subfamily. ADRA2A sub-subfamily.

The protein resides in the cell membrane. Alpha-2 adrenergic receptors mediate the catecholamine-induced inhibition of adenylate cyclase through the action of G proteins. The sequence is that of Alpha-2A adrenergic receptor from Mus musculus (Mouse).